We begin with the raw amino-acid sequence, 348 residues long: Rhodopsin (348 aa).

Met1 carries the post-translational modification N-acetylmethionine. At 1–36 (MNGTEGPNFYVPFSNKTGVVRSPFEYPQYYLAEPWQ) the chain is on the extracellular side. Residues Asn2 and Asn15 are each glycosylated (N-linked (GlcNAc...) asparagine). The chain crosses the membrane as a helical span at residues 37–61 (FSMLAAYMFLLIVLGFPINFLTLYV). Topologically, residues 62-73 (TVQHKNVRTPLN) are cytoplasmic. The helical transmembrane segment at 74–96 (YILLNLAVANHFMVFGGFTTTLY) threads the bilayer. Topologically, residues 97–110 (TSLHGYFVFGSTGC) are extracellular. Residues Cys110 and Cys187 are joined by a disulfide bond. The chain crosses the membrane as a helical span at residues 111–133 (NLEGFFATLGGEIALWSLVVLAI). The short motif at 134-136 (ERY) is the 'Ionic lock' involved in activated form stabilization element. Residues 134–152 (ERYVVVCKPMSNFRFGENH) lie on the Cytoplasmic side of the membrane. Residues 153–173 (AIMGVAFTWVMALACAAPPLV) traverse the membrane as a helical segment. Residues 174-202 (GWSRYIPEGMQCSCGIDYYTLKPEVNNES) lie on the Extracellular side of the membrane. Glu201 serves as a coordination point for Zn(2+). Residues 203-224 (FVIYMFVVHFTIPMTIIFFCYG) traverse the membrane as a helical segment. Topologically, residues 225 to 252 (QLVFTVKEAAAQQQESATTQKAEKEVTR) are cytoplasmic. The chain crosses the membrane as a helical span at residues 253–274 (MVIIMVIAFLICWVPYASVAFY). Topologically, residues 275 to 286 (IFTHQGSDFGPI) are extracellular. Gln279 contacts Zn(2+). Residues 287–308 (LMTLPAFFAKSSAIYNPVIYIM) traverse the membrane as a helical segment. The residue at position 296 (Lys296) is an N6-(retinylidene)lysine. Residues 309–348 (MNKQFRNCMLTTICCGKNPFGEEEGSTTASKTETSQVAPA) lie on the Cytoplasmic side of the membrane. 2 S-palmitoyl cysteine lipidation sites follow: Cys322 and Cys323. The interval 330–348 (EEEGSTTASKTETSQVAPA) is interaction with SAG. Residue Ser334 is modified to Phosphoserine. Phosphothreonine is present on residues Thr335 and Thr336. Position 338 is a phosphoserine (Ser338). Residues Thr340 and Thr342 each carry the phosphothreonine modification. Ser343 is modified (phosphoserine).

It belongs to the G-protein coupled receptor 1 family. Opsin subfamily. Homodimer. May form a complex composed of RHO, GRK1 and RCVRN in a Ca(2+)-dependent manner; RCVRN prevents the interaction between GRK1 and RHO. Interacts with GRK1. Interacts (phosphorylated form) with SAG. Interacts with GNAT1. Interacts with GNAT3. SAG and G-proteins compete for a common binding site. Interacts with PRCD; the interaction promotes PRCD stability. Forms a complex with ASAP1 and ARF4. Forms a complex with ASAP1, RAB11A, Rabin8/RAB3IP, ARF4 and RAB11FIP3; the complex regulates Golgi-to-cilia rhodopsin/RHO transport in photoreceptors. Post-translationally, phosphorylated on some or all of the serine and threonine residues present in the C-terminal region. Contains one covalently linked retinal chromophore. Upon light absorption, the covalently bound 11-cis-retinal is converted to all-trans-retinal. After hydrolysis of the Schiff base and release of the covalently bound all-trans-retinal, active rhodopsin is regenerated by binding of a fresh molecule of 11-cis-retinal.

It localises to the membrane. It is found in the cell projection. The protein resides in the cilium. Its subcellular location is the photoreceptor outer segment. Its function is as follows. Photoreceptor required for image-forming vision at low light intensity. Required for photoreceptor cell viability after birth. Light-induced isomerization of 11-cis to all-trans retinal triggers a conformational change that activates signaling via G-proteins. Subsequent receptor phosphorylation mediates displacement of the bound G-protein alpha subunit by the arrestin SAG and terminates signaling. This Loxodonta africana (African elephant) protein is Rhodopsin (RHO).